The primary structure comprises 382 residues: Norsolorinic acid reductase B (382 aa).

Asp64 contributes to the NADP(+) binding site. Tyr69 (proton donor) is an active-site residue. His143 lines the substrate pocket. Residues 173–174 (SD), Gln199, 228–238 (GVLNQGRFRTE), and 302–310 (RKVDHLTGV) each bind NADP(+).

Belongs to the aldo/keto reductase family. Aldo/keto reductase 2 subfamily.

It functions in the pathway mycotoxin biosynthesis; aflatoxin biosynthesis. Its function is as follows. Norsolorinic acid reductase; part of the gene cluster that mediates the biosynthesis of aflatoxins, a group of polyketide-derived furanocoumarins, and part of the most toxic and carcinogenic compounds among the known mycotoxins. The four major aflatoxins produced by A.parasiticus are aflatoxin B1 (AFB1), aflatoxin B2 (AFB2), aflatoxin G1 (AFG1) and aflatoxin G2 (AFG2). Within the aflatoxin pathway, the norsolorinic acid reductase aflE may play a role in the conversion of norsolorinic acid (NOR) to averantin (AVN). The biosynthesis of aflatoxins begins with the norsolorinic acid synthase aflC that combines a hexanoyl starter unit produced by the fatty acid synthase aflA/aflB and 7 malonyl-CoA extender units to synthesize the precursor NOR. The second step is the conversion of NOR to averantin and requires the norsolorinic acid ketoreductase aflD, which catalyzes the dehydration of norsolorinic acid to form (1'S)-averantin. The norsolorinic acid reductases aflE and aflF may also play a role in the conversion of NOR to AVN. The cytochrome P450 monooxygenase aflG then catalyzes the hydroxylation of AVN to 5'hydroxyaverantin (HAVN). The next step is performed by the 5'-hydroxyaverantin dehydrogenase aflH that transforms HAVN to 5'-oxoaverantin (OAVN) which is further converted to averufin (AVF) by aflK that plays a dual role in the pathway, as a 5'-oxoaverantin cyclase that mediates conversion of 5'-oxoaverantin, as well as a versicolorin B synthase in a later step in the pathway. The averufin oxidase aflI catalyzes the conversion of AVF to versiconal hemiacetal acetate (VHA). VHA is then the substrate for the versiconal hemiacetal acetate esterase aflJ to yield versiconal (VAL). Versicolorin B synthase aflK then converts VAL to versicolorin B (VERB) by closing the bisfuran ring of aflatoxin which is required for DNA-binding, thus giving to aflatoxin its activity as a mutagen. Then, the activity of the versicolorin B desaturase aflL leads to versicolorin A (VERA). A branch point starts from VERB since it can also be converted to dihydrodemethylsterigmatocystin (DMDHST), probably also by aflL, VERA being a precursor for aflatoxins B1 and G1, and DMDHST for aflatoxins B2 and G2. Next, the versicolorin reductase aflM and the cytochrome P450 monooxygenase aflN are involved in conversion of VERA to demethylsterigmatocystin (DMST). AflX and aflY seem also involved in this step, through probable aflX-mediated epoxide ring-opening step following versicolorin A oxidation and aflY-mediated Baeyer-Villiger oxidation required for the formation of the xanthone ring. The methyltransferase aflO then leads to the modification of DMST to sterigmatocystin (ST), and of DMDHST to dihydrosterigmatocystin (DHST). Both ST and DHST are then substrates of the O-methyltransferase aflP to yield O-methylsterigmatocystin (OMST) and dihydro-O-methylsterigmatocystin (DHOMST), respectively. Finally OMST is converted to aflatoxins B1 and G1, and DHOMST to aflatoxins B2 and G2, via the action of several enzymes including O-methylsterigmatocystin oxidoreductase aflQ, the cytochrome P450 monooxygenase aflU, but also the NADH-dependent flavin oxidoreductase nadA which is specifically required for the synthesis of AFG1. This chain is Norsolorinic acid reductase B, found in Aspergillus parasiticus (strain ATCC 56775 / NRRL 5862 / SRRC 143 / SU-1).